A 328-amino-acid chain; its full sequence is dITP/XTP pyrophosphatase (328 aa).

The unknown stretch occupies residues 1 to 129; sequence MSEKIYEYKD…ATSEQGFGDI (129 aa). An NTP pyrophosphatase region spans residues 130-324; the sequence is ILIATRNEGK…KLMEVFPAWQ (195 aa). Position 134–139 (134–139) interacts with substrate; that stretch reads TRNEGK. The active-site Proton acceptor is Asp-196. Mg(2+) is bound at residue Asp-196. Residues Ser-197, 280–283, Lys-303, and 308–309 contribute to the substrate site; these read FGYD and HR.

It belongs to the HAM1 NTPase family. Homodimer. Mg(2+) serves as cofactor.

The catalysed reaction is XTP + H2O = XMP + diphosphate + H(+). It carries out the reaction dITP + H2O = dIMP + diphosphate + H(+). The enzyme catalyses ITP + H2O = IMP + diphosphate + H(+). In terms of biological role, pyrophosphatase that catalyzes the hydrolysis of nucleoside triphosphates to their monophosphate derivatives, with a high preference for the non-canonical purine nucleotides XTP (xanthosine triphosphate), dITP (deoxyinosine triphosphate) and ITP. Seems to function as a house-cleaning enzyme that removes non-canonical purine nucleotides from the nucleotide pool, thus preventing their incorporation into DNA/RNA and avoiding chromosomal lesions. The chain is dITP/XTP pyrophosphatase from Streptococcus pyogenes serotype M3 (strain ATCC BAA-595 / MGAS315).